Reading from the N-terminus, the 233-residue chain is uncharacterized protein (233 aa).

The 69-residue stretch at K16 to K84 folds into the HTH gntR-type domain. Residues E44–S63 constitute a DNA-binding region (H-T-H motif).

This is an uncharacterized protein from Bacillus subtilis (strain 168).